Consider the following 72-residue polypeptide: uncharacterized protein (72 aa).

Belongs to the baculoviridae 8 kDa protein family.

This is an uncharacterized protein from Orgyia pseudotsugata (Douglas-fir tussock moth).